Reading from the N-terminus, the 651-residue chain is Endo-1,4-beta-xylanase A (651 aa).

The N-terminal stretch at 1–30 is a signal peptide; it reads MKRKVKKMAAMATSIIMAIMIILHSIPVLA. Residues 33–227 form the GH11 domain; it reads IIYDNETGTH…SSGYANVYKN (195 aa). Glutamate 124 serves as the catalytic Nucleophile. The Proton donor role is filled by glutamate 214. CBM6 domains lie at 250-370, 387-507, and 527-647; these read SIIE…FIFS, SIIQ…FVFT, and SNIQ…FVFS. Ca(2+) contacts are provided by glutamate 253 and glutamate 255. Threonine 270 is a binding site for D-xylotriose. Arginine 275 contacts Ca(2+). Repeat 1 spans residues 278–339; that stretch reads GYIENGNTVT…SSTGSWNTYQ (62 aa). Residues 278 to 616 are 3 X 61 AA approximate repeats; the sequence is GYIENGNTVT…GSTGSFDTYR (339 aa). D-xylotriose is bound by residues tyrosine 279, asparagine 336, and asparagine 363. D-xylobiose is bound by residues tyrosine 279, asparagine 336, and asparagine 363. Residue aspartate 365 coordinates Ca(2+). Copy 2 of the repeat occupies 415–476; it reads GYIENGYSTT…PSTNSWDSYQ (62 aa). Positions 530, 532, and 552 each coordinate Ca(2+). Repeat unit 3 spans residues 555–616; that stretch reads GYIENGYSTT…GSTGSFDTYR (62 aa). D-xylotriose is bound by residues tyrosine 556, aspartate 613, and asparagine 640. Position 642 (aspartate 642) interacts with Ca(2+).

This sequence belongs to the glycosyl hydrolase 11 (cellulase G) family.

The protein localises to the secreted. The enzyme catalyses Endohydrolysis of (1-&gt;4)-beta-D-xylosidic linkages in xylans.. It functions in the pathway glycan degradation; xylan degradation. In terms of biological role, endoxylanase that degrades arabinoxylan and glucuronoxylan to xylobiose and xylotriose (in vitro). This is Endo-1,4-beta-xylanase A (xynA) from Thermoclostridium stercorarium (Clostridium stercorarium).